Consider the following 258-residue polypeptide: Tryptophan synthase alpha chain (258 aa).

Residues glutamate 47 and aspartate 58 each act as proton acceptor in the active site.

The protein belongs to the TrpA family. Tetramer of two alpha and two beta chains.

The catalysed reaction is (1S,2R)-1-C-(indol-3-yl)glycerol 3-phosphate + L-serine = D-glyceraldehyde 3-phosphate + L-tryptophan + H2O. The protein operates within amino-acid biosynthesis; L-tryptophan biosynthesis; L-tryptophan from chorismate: step 5/5. In terms of biological role, the alpha subunit is responsible for the aldol cleavage of indoleglycerol phosphate to indole and glyceraldehyde 3-phosphate. This Bacillus cereus (strain ZK / E33L) protein is Tryptophan synthase alpha chain.